An 857-amino-acid polypeptide reads, in one-letter code: Aminopeptidase N (857 aa).

Substrate is bound by residues Glu130 and 264-268 (GAMEN). His298 contacts Zn(2+). Glu299 acts as the Proton acceptor in catalysis. Zn(2+) contacts are provided by His302 and Glu321.

It belongs to the peptidase M1 family. Monomer. Zn(2+) is required as a cofactor. In terms of processing, the N-terminus is blocked.

The protein resides in the cytoplasm. It catalyses the reaction Release of an N-terminal amino acid, Xaa-|-Yaa- from a peptide, amide or arylamide. Xaa is preferably Ala, but may be most amino acids including Pro (slow action). When a terminal hydrophobic residue is followed by a prolyl residue, the two may be released as an intact Xaa-Pro dipeptide.. Functionally, aminopeptidase with broad substrate specificity to several peptides. Shows strong preference for leucine but also cleaves next to Arg and Lys in peptide-bond-containing substrates. This is Aminopeptidase N (pepN) from Streptomyces lividans.